The following is a 594-amino-acid chain: Aspartate--tRNA(Asp/Asn) ligase (594 aa).

Glu-175 provides a ligand contact to L-aspartate. The interval 199–202 is aspartate; the sequence is QLFK. Arg-221 lines the L-aspartate pocket. ATP is bound by residues 221–223 and Gln-230; that span reads RDE. Residue His-446 participates in L-aspartate binding. Residue Glu-491 coordinates ATP. Arg-498 serves as a coordination point for L-aspartate. 543-546 contacts ATP; the sequence is GLDR.

It belongs to the class-II aminoacyl-tRNA synthetase family. Type 1 subfamily. Homodimer.

The protein resides in the cytoplasm. It carries out the reaction tRNA(Asx) + L-aspartate + ATP = L-aspartyl-tRNA(Asx) + AMP + diphosphate. Functionally, aspartyl-tRNA synthetase with relaxed tRNA specificity since it is able to aspartylate not only its cognate tRNA(Asp) but also tRNA(Asn). Reaction proceeds in two steps: L-aspartate is first activated by ATP to form Asp-AMP and then transferred to the acceptor end of tRNA(Asp/Asn). In Thermodesulfovibrio yellowstonii (strain ATCC 51303 / DSM 11347 / YP87), this protein is Aspartate--tRNA(Asp/Asn) ligase.